The sequence spans 684 residues: 1,4-alpha-glucan-branching enzyme (684 aa).

(1,4-alpha-D-glucosyl)n-binding residues include tryptophan 88 and lysine 123. The active-site Nucleophile is aspartate 340. Glutamate 395 functions as the Proton donor in the catalytic mechanism.

It belongs to the glycosyl hydrolase 13 family. GlgB subfamily.

Its subcellular location is the cytoplasm. The catalysed reaction is Transfers a segment of a (1-&gt;4)-alpha-D-glucan chain to a primary hydroxy group in a similar glucan chain.. It participates in glycan biosynthesis; glycogen biosynthesis. In terms of biological role, glycogen-branching enzyme participates in the glycogen biosynthetic process along with glycogenin and glycogen synthase. Generates alpha-1,6-glucosidic branches from alpha-1,4-linked glucose chains, to increase solubility of the glycogen polymer. This is 1,4-alpha-glucan-branching enzyme (be1) from Emericella nidulans (strain FGSC A4 / ATCC 38163 / CBS 112.46 / NRRL 194 / M139) (Aspergillus nidulans).